The following is a 279-amino-acid chain: 4-deoxy-L-threo-5-hexosulose-uronate ketol-isomerase (279 aa).

Positions 197, 199, 204, and 246 each coordinate Zn(2+).

Belongs to the KduI family. Requires Zn(2+) as cofactor.

The catalysed reaction is 5-dehydro-4-deoxy-D-glucuronate = 3-deoxy-D-glycero-2,5-hexodiulosonate. The protein operates within glycan metabolism; pectin degradation; 2-dehydro-3-deoxy-D-gluconate from pectin: step 4/5. Catalyzes the isomerization of 5-dehydro-4-deoxy-D-glucuronate to 3-deoxy-D-glycero-2,5-hexodiulosonate. The protein is 4-deoxy-L-threo-5-hexosulose-uronate ketol-isomerase of Kineococcus radiotolerans (strain ATCC BAA-149 / DSM 14245 / SRS30216).